The following is an 88-amino-acid chain: Small ribosomal subunit protein uS17 (88 aa).

This sequence belongs to the universal ribosomal protein uS17 family. In terms of assembly, part of the 30S ribosomal subunit.

In terms of biological role, one of the primary rRNA binding proteins, it binds specifically to the 5'-end of 16S ribosomal RNA. The sequence is that of Small ribosomal subunit protein uS17 from Lawsonia intracellularis (strain PHE/MN1-00).